A 648-amino-acid chain; its full sequence is Biosynthetic arginine decarboxylase (648 aa).

K109 is subject to N6-(pyridoxal phosphate)lysine. I291–F301 is a binding site for substrate.

The protein belongs to the Orn/Lys/Arg decarboxylase class-II family. SpeA subfamily. Requires Mg(2+) as cofactor. The cofactor is pyridoxal 5'-phosphate.

It catalyses the reaction L-arginine + H(+) = agmatine + CO2. It participates in amine and polyamine biosynthesis; agmatine biosynthesis; agmatine from L-arginine: step 1/1. Catalyzes the biosynthesis of agmatine from arginine. The sequence is that of Biosynthetic arginine decarboxylase from Prochlorococcus marinus (strain MIT 9301).